The chain runs to 57 residues: MSRLYAIILIALVFNVVMTITPDMKVEAATCEDCPEHCATQNARAKCDNDKCVCEPK.

The first 28 residues, methionine 1 to alanine 28, serve as a signal peptide directing secretion. Intrachain disulfides connect cysteine 31–cysteine 47, cysteine 34–cysteine 52, and cysteine 38–cysteine 54.

The protein belongs to the short scorpion toxin superfamily. Potassium channel inhibitor family. Alpha-KTx 08 subfamily. As to expression, expressed by the venom gland.

It localises to the secreted. In terms of biological role, this toxin inhibits rKv1.1/KCNA1 (100% inhibition at 3 uM), Kv1.3/KCNA3 (human, mouse and rat) (IC(50)=269-467 nM), shaker IR (60% at 3 uM) and activates the mouse capsaicin receptor TRPV1 (EC(50)=132 uM, at 20 degrees Celsius), a non-selective cation channel expressed by sensory neurons of the pain pathway. In vivo, intraplantar injection of this toxin in WT mice hind paw shows significant acute pain, whereas no pain is observed when the toxin is injected into TRPV1 KO mice. In addition, subcutaneous injection into mice (185 mg) produces an excitation of the animal, but no lethality, whereas injection into cockroaches does not provoke lethality as well. This Olivierus martensii (Manchurian scorpion) protein is Potassium channel toxin alpha-KTx 8.2.